A 1534-amino-acid polypeptide reads, in one-letter code: DNA-directed RNA polymerase subunit beta'' (1534 aa).

4 residues coordinate Zn(2+): Cys-220, Cys-296, Cys-303, and Cys-306. 2 stretches are compositionally biased toward basic and acidic residues: residues 644-668 and 678-688; these read RTQE…RTRE and PENKYRTREGE. Disordered stretches follow at residues 644-698 and 719-800; these read RTQE…EDEY and YRTL…KKEG. 2 stretches are compositionally biased toward acidic residues: residues 744–762 and 770–789; these read GEYE…SSED and TLEE…EYGS.

The protein belongs to the RNA polymerase beta' chain family. RpoC2 subfamily. As to quaternary structure, in plastids the minimal PEP RNA polymerase catalytic core is composed of four subunits: alpha, beta, beta', and beta''. When a (nuclear-encoded) sigma factor is associated with the core the holoenzyme is formed, which can initiate transcription. Zn(2+) serves as cofactor.

The protein localises to the plastid. It is found in the chloroplast. The catalysed reaction is RNA(n) + a ribonucleoside 5'-triphosphate = RNA(n+1) + diphosphate. DNA-dependent RNA polymerase catalyzes the transcription of DNA into RNA using the four ribonucleoside triphosphates as substrates. The protein is DNA-directed RNA polymerase subunit beta'' of Saccharum hybrid (Sugarcane).